The sequence spans 298 residues: Probable 2-(5''-triphosphoribosyl)-3'-dephosphocoenzyme-A synthase 2 (298 aa).

It belongs to the CitG/MdcB family.

The enzyme catalyses 3'-dephospho-CoA + ATP = 2'-(5''-triphospho-alpha-D-ribosyl)-3'-dephospho-CoA + adenine. The polypeptide is Probable 2-(5''-triphosphoribosyl)-3'-dephosphocoenzyme-A synthase 2 (Salmonella choleraesuis (strain SC-B67)).